A 203-amino-acid polypeptide reads, in one-letter code: Small ribosomal subunit protein uS2 (203 aa).

It belongs to the universal ribosomal protein uS2 family.

This Methanoregula boonei (strain DSM 21154 / JCM 14090 / 6A8) protein is Small ribosomal subunit protein uS2.